The primary structure comprises 274 residues: Shikimate dehydrogenase (NADP(+)) (274 aa).

Shikimate is bound by residues 14–16 and T61; that span reads SLS. Residue K65 is the Proton acceptor of the active site. 2 residues coordinate shikimate: N85 and D106. Residues 130-134, 153-158, and A217 each bind NADP(+); these read GAGGA and NRTAER. Y219 serves as a coordination point for shikimate. G240 contributes to the NADP(+) binding site.

The protein belongs to the shikimate dehydrogenase family. In terms of assembly, homodimer.

It catalyses the reaction shikimate + NADP(+) = 3-dehydroshikimate + NADPH + H(+). The protein operates within metabolic intermediate biosynthesis; chorismate biosynthesis; chorismate from D-erythrose 4-phosphate and phosphoenolpyruvate: step 4/7. Functionally, involved in the biosynthesis of the chorismate, which leads to the biosynthesis of aromatic amino acids. Catalyzes the reversible NADPH linked reduction of 3-dehydroshikimate (DHSA) to yield shikimate (SA). The chain is Shikimate dehydrogenase (NADP(+)) from Halorubrum lacusprofundi (strain ATCC 49239 / DSM 5036 / JCM 8891 / ACAM 34).